A 477-amino-acid chain; its full sequence is Methylenetetrahydrofolate--tRNA-(uracil-5-)-methyltransferase TrmFO (477 aa).

Residue 14–19 (GGGLAG) participates in FAD binding.

It belongs to the MnmG family. TrmFO subfamily. FAD is required as a cofactor.

It localises to the cytoplasm. The enzyme catalyses uridine(54) in tRNA + (6R)-5,10-methylene-5,6,7,8-tetrahydrofolate + NADH + H(+) = 5-methyluridine(54) in tRNA + (6S)-5,6,7,8-tetrahydrofolate + NAD(+). It catalyses the reaction uridine(54) in tRNA + (6R)-5,10-methylene-5,6,7,8-tetrahydrofolate + NADPH + H(+) = 5-methyluridine(54) in tRNA + (6S)-5,6,7,8-tetrahydrofolate + NADP(+). Catalyzes the folate-dependent formation of 5-methyl-uridine at position 54 (M-5-U54) in all tRNAs. This is Methylenetetrahydrofolate--tRNA-(uracil-5-)-methyltransferase TrmFO from Rhizobium johnstonii (strain DSM 114642 / LMG 32736 / 3841) (Rhizobium leguminosarum bv. viciae).